We begin with the raw amino-acid sequence, 141 residues long: Hemoglobin subunit alpha-A (141 aa).

Residues 1-141 (VLTEEDKSRV…VAKTLVSRYR (141 aa)) form the Globin domain. His58 is an O2 binding site. His87 contributes to the heme b binding site.

This sequence belongs to the globin family. Heterotetramer of two alpha chains and two beta chains. Red blood cells.

Involved in oxygen transport from the lung to the various peripheral tissues. This Drymarchon melanurus erebennus (Texas indigo snake) protein is Hemoglobin subunit alpha-A.